The chain runs to 302 residues: MNTDTFMCSSDEKQTRSPLSLYSEYQRMEIEFRAPHIMPTSHWHGQVEVNVPFDGDVEYLINNEKVNINQGHITLFWACTPHQLTDTGTCQSMAIFNLPMHLFLSWPLDKDLINHVTHGMVIKSLATQQLSPFEVRRWQQELNSPNEQIRQLAIDEIGLMLKRFSLSGWEPILVNKTSRTHKNSVSRHAQFYVSQMLGFIAENYDQALTINDVAEHVKLNANYAMGIFQRVMQLTMKQYITAMRINHVRALLSDTDKSILDIALTAGFRSSSRFYSTFGKYVGMSPQQYRKLSQQRRQTFPG.

The HTH araC/xylS-type domain maps to 194–292 (SQMLGFIAEN…GMSPQQYRKL (99 aa)). DNA-binding regions (H-T-H motif) lie at residues 211–232 (NDVA…QRVM) and 259–282 (ILDI…GKYV).

Transcription activator for the expression of the melAB operon. MelR binds at two sites located upstream of the melAB transcription site. The sequence is that of Melibiose operon regulatory protein (melR) from Escherichia coli O6:H1 (strain CFT073 / ATCC 700928 / UPEC).